The sequence spans 353 residues: 4-hydroxy-2-oxovalerate aldolase 1 (353 aa).

The region spanning 14–266 is the Pyruvate carboxyltransferase domain; that stretch reads VRMTDTSLRD…KTGIDFFDIA (253 aa). 22–23 is a binding site for substrate; sequence RD. Asp-23 provides a ligand contact to Mn(2+). His-26 acts as the Proton acceptor in catalysis. Positions 176 and 205 each coordinate substrate. His-205 and His-207 together coordinate Mn(2+). Residue Tyr-296 participates in substrate binding.

This sequence belongs to the 4-hydroxy-2-oxovalerate aldolase family.

It carries out the reaction (S)-4-hydroxy-2-oxopentanoate = acetaldehyde + pyruvate. This Mycobacterium sp. (strain KMS) protein is 4-hydroxy-2-oxovalerate aldolase 1.